The chain runs to 150 residues: Nucleoside diphosphate kinase (150 aa).

ATP contacts are provided by K10, F58, R86, T92, R103, and N113. The Pros-phosphohistidine intermediate role is filled by H116.

Belongs to the NDK family. In terms of assembly, homohexamer. It depends on Mg(2+) as a cofactor.

It carries out the reaction a 2'-deoxyribonucleoside 5'-diphosphate + ATP = a 2'-deoxyribonucleoside 5'-triphosphate + ADP. It catalyses the reaction a ribonucleoside 5'-diphosphate + ATP = a ribonucleoside 5'-triphosphate + ADP. Functionally, major role in the synthesis of nucleoside triphosphates other than ATP. The ATP gamma phosphate is transferred to the NDP beta phosphate via a ping-pong mechanism, using a phosphorylated active-site intermediate. The sequence is that of Nucleoside diphosphate kinase (awd) from Drosophila yakuba (Fruit fly).